The chain runs to 142 residues: Hemoglobin subunit beta (142 aa).

A Globin domain is found at 3 to 142 (KLSEDQEHYI…VAEALSSNYH (140 aa)). 2 residues coordinate heme b: His-60 and His-89.

It belongs to the globin family. Heterotetramer of two alpha chains and two beta chains. In terms of tissue distribution, red blood cells.

Functionally, involved in oxygen transport from gills to the various peripheral tissues. The sequence is that of Hemoglobin subunit beta (HBB) from Hemitrygon akajei (Red stingray).